A 432-amino-acid polypeptide reads, in one-letter code: MEKLTLSPISRIDGEINLPGSKSLSNRALLLAALAKGTTQVTNLLDSDDIRYMLNALKALGVNYQLSDDKTVCVVEGIGGAFQWQNGLSLFLGNAGTAMRPLAAALCLKGDTESEVILTGEPRMKERPIKHLVDALRQTGANIQYLENDGYPPLAIRNQGIFGGKVQIDGSISSQFLTALLMAAPLGEGDMEIEILGELVSKPYIDITPAMMKDFGINVDDYNYQRFLIKGKQYYISPQTYLVEGDASSASYFLAAAAIKGKVKVTGIGRNSIQGDRLFADVLAQMGAKVTWGEDFIQVEKSELKGIDMDMNHIPDAAMTIAITALFAQGETVIRNIYNWRVKETDRLTAIATELRKLGAEVEEGEDFIRIQPLALDKFKHAEIATYNDHRIAMCFSLIALSDTSVTILDPACTAKTFPTYFSEFEKISKNQ.

3-phosphoshikimate contacts are provided by Lys-22, Ser-23, and Arg-27. Lys-22 lines the phosphoenolpyruvate pocket. Residues Gly-96 and Arg-127 each coordinate phosphoenolpyruvate. Ser-173, Ser-174, Gln-175, Ser-201, Asp-316, Asn-339, and Lys-343 together coordinate 3-phosphoshikimate. Gln-175 contacts phosphoenolpyruvate. Asp-316 serves as the catalytic Proton acceptor. 3 residues coordinate phosphoenolpyruvate: Arg-347, Arg-391, and Lys-416.

It belongs to the EPSP synthase family. In terms of assembly, monomer.

The protein resides in the cytoplasm. It carries out the reaction 3-phosphoshikimate + phosphoenolpyruvate = 5-O-(1-carboxyvinyl)-3-phosphoshikimate + phosphate. The protein operates within metabolic intermediate biosynthesis; chorismate biosynthesis; chorismate from D-erythrose 4-phosphate and phosphoenolpyruvate: step 6/7. Its function is as follows. Catalyzes the transfer of the enolpyruvyl moiety of phosphoenolpyruvate (PEP) to the 5-hydroxyl of shikimate-3-phosphate (S3P) to produce enolpyruvyl shikimate-3-phosphate and inorganic phosphate. The protein is 3-phosphoshikimate 1-carboxyvinyltransferase of Histophilus somni (Haemophilus somnus).